We begin with the raw amino-acid sequence, 63 residues long: uncharacterized protein (63 aa).

A helical membrane pass occupies residues 3-23 (IIYIILGFLSLAIGIIGIFPS).

It localises to the membrane. This is an uncharacterized protein from Haemophilus influenzae (strain ATCC 51907 / DSM 11121 / KW20 / Rd).